Reading from the N-terminus, the 323-residue chain is tRNA dimethylallyltransferase (323 aa).

13 to 20 serves as a coordination point for ATP; the sequence is GPTASGKT. 15 to 20 is a binding site for substrate; the sequence is TASGKT. 4 interaction with substrate tRNA regions span residues 42-45, 166-170, 251-256, and 284-291; these read DSAL, QRIQR, RCVGYR, and KRQITWLR.

This sequence belongs to the IPP transferase family. In terms of assembly, monomer. Requires Mg(2+) as cofactor.

The enzyme catalyses adenosine(37) in tRNA + dimethylallyl diphosphate = N(6)-dimethylallyladenosine(37) in tRNA + diphosphate. In terms of biological role, catalyzes the transfer of a dimethylallyl group onto the adenine at position 37 in tRNAs that read codons beginning with uridine, leading to the formation of N6-(dimethylallyl)adenosine (i(6)A). The polypeptide is tRNA dimethylallyltransferase (Acidovorax ebreus (strain TPSY) (Diaphorobacter sp. (strain TPSY))).